A 156-amino-acid polypeptide reads, in one-letter code: Small ribosomal subunit protein uS7 (156 aa).

It belongs to the universal ribosomal protein uS7 family. Part of the 30S ribosomal subunit. Contacts proteins S9 and S11.

One of the primary rRNA binding proteins, it binds directly to 16S rRNA where it nucleates assembly of the head domain of the 30S subunit. Is located at the subunit interface close to the decoding center, probably blocks exit of the E-site tRNA. The chain is Small ribosomal subunit protein uS7 from Histophilus somni (strain 129Pt) (Haemophilus somnus).